The primary structure comprises 205 residues: Holliday junction branch migration complex subunit RuvA (205 aa).

The interval 1-62 (MFEYVTGYVE…EDIMALYGFK (62 aa)) is domain I. Positions 63 to 141 (TREERLLFTK…DVVPDAFVDL (79 aa)) are domain II. A flexible linker region spans residues 142–152 (FSDTERFDEKK). The tract at residues 153 to 205 (GTSAELDEALEALRALGYAEREVSRVVPELLKESLTTDQYIKKALSLLLNGKR) is domain III.

This sequence belongs to the RuvA family. Homotetramer. Forms an RuvA(8)-RuvB(12)-Holliday junction (HJ) complex. HJ DNA is sandwiched between 2 RuvA tetramers; dsDNA enters through RuvA and exits via RuvB. An RuvB hexamer assembles on each DNA strand where it exits the tetramer. Each RuvB hexamer is contacted by two RuvA subunits (via domain III) on 2 adjacent RuvB subunits; this complex drives branch migration. In the full resolvosome a probable DNA-RuvA(4)-RuvB(12)-RuvC(2) complex forms which resolves the HJ.

The protein resides in the cytoplasm. The RuvA-RuvB-RuvC complex processes Holliday junction (HJ) DNA during genetic recombination and DNA repair, while the RuvA-RuvB complex plays an important role in the rescue of blocked DNA replication forks via replication fork reversal (RFR). RuvA specifically binds to HJ cruciform DNA, conferring on it an open structure. The RuvB hexamer acts as an ATP-dependent pump, pulling dsDNA into and through the RuvAB complex. HJ branch migration allows RuvC to scan DNA until it finds its consensus sequence, where it cleaves and resolves the cruciform DNA. This is Holliday junction branch migration complex subunit RuvA from Bacillus cereus (strain G9842).